The chain runs to 296 residues: GTPase Era (296 aa).

The Era-type G domain occupies 3–170 (KSGFVTIVGR…KELMFKYIPE (168 aa)). Positions 11 to 18 (GRPNVGKS) are G1. 11–18 (GRPNVGKS) lines the GTP pocket. The G2 stretch occupies residues 37 to 41 (QTTRN). Positions 58–61 (DTPG) are G3. GTP-binding positions include 58–62 (DTPGI) and 120–123 (NKID). The interval 120–123 (NKID) is G4. The G5 stretch occupies residues 149–151 (ISA). In terms of domain architecture, KH type-2 spans 201–278 (LSEEVPHGIA…YIRLWVKVKE (78 aa)).

It belongs to the TRAFAC class TrmE-Era-EngA-EngB-Septin-like GTPase superfamily. Era GTPase family. As to quaternary structure, monomer.

The protein resides in the cytoplasm. It is found in the cell membrane. An essential GTPase that binds both GDP and GTP, with rapid nucleotide exchange. Plays a role in 16S rRNA processing and 30S ribosomal subunit biogenesis and possibly also in cell cycle regulation and energy metabolism. This is GTPase Era from Clostridium botulinum (strain ATCC 19397 / Type A).